The chain runs to 203 residues: A-type ATP synthase subunit E (203 aa).

Belongs to the V-ATPase E subunit family. As to quaternary structure, has multiple subunits with at least A(3), B(3), C, D, E, F, H, I and proteolipid K(x).

It is found in the cell membrane. Functionally, component of the A-type ATP synthase that produces ATP from ADP in the presence of a proton gradient across the membrane. The chain is A-type ATP synthase subunit E from Methanococcus maripaludis (strain DSM 14266 / JCM 13030 / NBRC 101832 / S2 / LL).